We begin with the raw amino-acid sequence, 538 residues long: Chaperonin GroEL (538 aa).

Residues 29–32 (TLGP), 86–90 (DGTTT), Gly413, 477–479 (NAA), and Asp493 contribute to the ATP site.

It belongs to the chaperonin (HSP60) family. In terms of assembly, forms a cylinder of 14 subunits composed of two heptameric rings stacked back-to-back. Interacts with the co-chaperonin GroES.

It is found in the cytoplasm. The catalysed reaction is ATP + H2O + a folded polypeptide = ADP + phosphate + an unfolded polypeptide.. Functionally, together with its co-chaperonin GroES, plays an essential role in assisting protein folding. The GroEL-GroES system forms a nano-cage that allows encapsulation of the non-native substrate proteins and provides a physical environment optimized to promote and accelerate protein folding. This is Chaperonin GroEL from Scardovia inopinata (Bifidobacterium inopinatum).